We begin with the raw amino-acid sequence, 685 residues long: Pentatricopeptide repeat-containing protein At5g19020, mitochondrial (685 aa).

The transit peptide at 1 to 23 (MIKLIRFFRSRRCWVISLQARCF) directs the protein to the mitochondrion. 17 PPR repeats span residues 40-74 (TERA…GLDS), 75-105 (NGYI…HAKL), 106-136 (DSAS…MPER), 137-171 (SCVS…GIML), 172-206 (NEVT…KLEG), 207-237 (RVFV…MPER), 238-268 (NLVT…ITEK), 269-303 (DIVS…GMKP), 304-338 (SEVM…GFDC), 339-369 (YDFL…SVKD), 370-400 (HIAS…THDK), 401-435 (DIFS…SQVK), 437-471 (DAIT…TIPP), 472-502 (NDNL…TKNI), 506-540 (TISP…PIKP), 541-576 (NSIT…GIEP), and 577-607 (DIKH…MPVK). The segment at 612 to 685 (IWGMLLSASR…EWSRAFSGVV (74 aa)) is type E motif; degenerate.

This sequence belongs to the PPR family. PCMP-E subfamily.

The protein resides in the mitochondrion. This chain is Pentatricopeptide repeat-containing protein At5g19020, mitochondrial (PCMP-E42), found in Arabidopsis thaliana (Mouse-ear cress).